The chain runs to 217 residues: Gas vesicle protein F2 (217 aa).

This sequence belongs to the gas vesicle GvpF/GvpL family. As to quaternary structure, binds GvpA.

The protein localises to the gas vesicle. It is found in the cytoplasm. Its function is as follows. A minor component of the gas vesicle, may be involved in preventing GvpA aggregation during gas vesicle nucleation. Gas vesicles are hollow, gas filled proteinaceous nanostructures found in several microbial planktonic microorganisms. They allow positioning of halobacteria at the optimal depth for growth in the poorly aerated, shallow brine pools of their habitat. Functionally, expression of 2 c-vac DNA fragments containing 2 divergently transcribed regions (gvpE-gvpF-gvpG-gvpH-gvpI-gvpJ-gvpK-gvpL-gvpM and gvpA-gvpC-gvpN-gvpO) allows H.volcanii to produce gas vesicles. Note that gvpD is not necessary for gas vesicle formation. The chain is Gas vesicle protein F2 from Halobacterium salinarum (strain ATCC 700922 / JCM 11081 / NRC-1) (Halobacterium halobium).